The chain runs to 97 residues: Defensin-like protein 196 (97 aa).

The signal sequence occupies residues Met1–Ala28. 4 disulfides stabilise this stretch: Cys33–Cys85, Cys46–Cys70, Cys55–Cys80, and Cys59–Cys82.

Belongs to the DEFL family. Protease inhibitor I18 (RTI/MTI-2) subfamily.

It localises to the secreted. The protein is Defensin-like protein 196 (ATTI4) of Arabidopsis thaliana (Mouse-ear cress).